A 1052-amino-acid polypeptide reads, in one-letter code: Carboxylic acid reductase (1052 aa).

The interval 21–344 (RALNEPNREW…ATEFTPFPFY (324 aa)) is adenylation (A) domain. AMP-binding positions include 334-335 (SA), Thr-339, and 419-422 (YQGR). Positions 560–643 (SSSDALIVSI…RLADYLLSIV (84 aa)) constitute a Carrier domain. Residue Ser-595 is modified to O-(pantetheine 4'-phosphoryl)serine. Positions 684 to 979 (GQVVVITGTT…QKIVPLDEWL (296 aa)) are carboxylic acid reductase (R) domain. NADP(+) contacts are provided by residues 693–696 (TGGI), Arg-718, 774–776 (NQW), Ser-814, Tyr-844, and Lys-848.

This sequence belongs to the adenylate-forming reductase family. The cofactor is Mg(2+).

It catalyses the reaction an aromatic aldehyde + AMP + diphosphate + NADP(+) = an aromatic carboxylate + ATP + NADPH + H(+). It carries out the reaction a carboxylate + ATP + NADPH + H(+) = an aldehyde + AMP + diphosphate + NADP(+). The catalysed reaction is benzoate + ATP + NADPH + H(+) = benzaldehyde + AMP + diphosphate + NADP(+). The enzyme catalyses (E)-cinnamate + ATP + NADPH + H(+) = (E)-cinnamaldehyde + AMP + diphosphate + NADP(+). It catalyses the reaction piperonylate + ATP + NADPH + H(+) = piperonal + AMP + diphosphate + NADP(+). It carries out the reaction salicylate + ATP + NADPH + H(+) = salicylaldehyde + AMP + diphosphate + NADP(+). The catalysed reaction is 3-hydroxybenzoate + ATP + NADPH + H(+) = 3-hydroxybenzaldehyde + AMP + diphosphate + NADP(+). The enzyme catalyses 2-methoxybenzoate + ATP + NADPH + H(+) = 2-methoxybenzaldehyde + AMP + diphosphate + NADP(+). It catalyses the reaction 3-methoxybenzoate + ATP + NADPH + H(+) = 3-methoxybenzaldehyde + AMP + diphosphate + NADP(+). It carries out the reaction 4-hydroxybenzoate + ATP + NADPH + H(+) = 4-hydroxybenzaldehyde + AMP + diphosphate + NADP(+). The catalysed reaction is 4-methoxybenzoate + ATP + NADPH + H(+) = 4-methoxybenzaldehyde + AMP + diphosphate + NADP(+). The enzyme catalyses 3-phenylpropanoate + ATP + NADPH + H(+) = 3-phenylpropanal + AMP + diphosphate + NADP(+). It catalyses the reaction picolinate + ATP + NADPH + H(+) = picolinal + AMP + diphosphate + NADP(+). It carries out the reaction propanoate + ATP + NADPH + H(+) = propanal + AMP + diphosphate + NADP(+). The catalysed reaction is butanoate + ATP + NADPH + H(+) = butanal + AMP + diphosphate + NADP(+). The enzyme catalyses pentanoate + ATP + NADPH + H(+) = pentanal + AMP + diphosphate + NADP(+). It catalyses the reaction hexanoate + ATP + NADPH + H(+) = hexanal + AMP + diphosphate + NADP(+). It carries out the reaction heptanoate + ATP + NADPH + H(+) = heptanal + AMP + diphosphate + NADP(+). The catalysed reaction is octanoate + ATP + NADPH + H(+) = octanal + AMP + diphosphate + NADP(+). The enzyme catalyses nonanoate + ATP + NADPH + H(+) = nonanal + AMP + diphosphate + NADP(+). Carboxylic acid reductase that shows a broad range of substrate specificity towards aromatic acids, especially to phenyl carboxylic and phenyl acrylic acids, to convert them into their respective aldehydes. Also able to use aliphatic acids as substrates. The protein is Carboxylic acid reductase of Neurospora crassa (strain ATCC 24698 / 74-OR23-1A / CBS 708.71 / DSM 1257 / FGSC 987).